Here is a 644-residue protein sequence, read N- to C-terminus: Ribonuclease R (644 aa).

The region spanning 211 to 529 (RINYSHIPFI…LHRLLKELLF (319 aa)) is the RNB domain. The S1 motif domain occupies 573–644 (LELLEKEFLG…ITERIKEHVS (72 aa)).

This sequence belongs to the RNR ribonuclease family. RNase R subfamily.

Its subcellular location is the cytoplasm. The catalysed reaction is Exonucleolytic cleavage in the 3'- to 5'-direction to yield nucleoside 5'-phosphates.. 3'-5' exoribonuclease that releases 5'-nucleoside monophosphates and is involved in maturation of structured RNAs. The chain is Ribonuclease R from Helicobacter pylori (strain ATCC 700392 / 26695) (Campylobacter pylori).